The following is a 266-amino-acid chain: Protein crossbronx-like (266 aa).

Positions 15–178 constitute a UBC core domain; sequence KQGYHILAEY…VQEQAILSRN (164 aa). The interval 226–266 is disordered; that stretch reads SEYLGHIDSSRQMDEEETNQLEKLHRGRIPEPQREEAEVSL. Positions 245-266 are enriched in basic and acidic residues; sequence QLEKLHRGRIPEPQREEAEVSL.

It belongs to the ubiquitin-conjugating enzyme family. FTS subfamily.

The sequence is that of Protein crossbronx-like from Drosophila sechellia (Fruit fly).